Consider the following 126-residue polypeptide: Adult-specific rigid cuticular protein 12.4 (126 aa).

The 79-residue stretch at glycine 9–proline 87 folds into the Chitin-binding type R&amp;R domain.

Its function is as follows. Component of the rigid cuticle of the spider. The polypeptide is Adult-specific rigid cuticular protein 12.4 (Araneus diadematus (European garden spider)).